The following is a 663-amino-acid chain: Rho GTPase-activating protein 18 (663 aa).

The tract at residues 15–37 (YHPSGKDQTVGNSHAKAGEEATS) is disordered. 2 positions are modified to phosphoserine: Ser66 and Ser69. A Phosphothreonine modification is found at Thr158. Disordered regions lie at residues 179–227 (RESK…PAPE) and 243–277 (QKES…TRIG). Composition is skewed to basic and acidic residues over residues 197 to 219 (NENK…KLIP) and 245 to 258 (ESSK…KGDD). Ser263 is subject to Phosphoserine. One can recognise a Rho-GAP domain in the interval 324–523 (VPLTALLEQD…LLIKYQKLLW (200 aa)). Residue Ser610 is modified to Phosphoserine.

In terms of assembly, interacts with MPHOSPH6.

Its subcellular location is the cytoplasm. Functionally, rho GTPase activating protein that suppresses F-actin polymerization by inhibiting Rho. Rho GTPase activating proteins act by converting Rho-type GTPases to an inactive GDP-bound state. Plays a key role in tissue tension and 3D tissue shape by regulating cortical actomyosin network formation. Acts downstream of YAP1 and inhibits actin polymerization, which in turn reduces nuclear localization of YAP1. Regulates cell shape, spreading, and migration. The polypeptide is Rho GTPase-activating protein 18 (Homo sapiens (Human)).